Here is a 584-residue protein sequence, read N- to C-terminus: Aspartate--tRNA(Asp/Asn) ligase (584 aa).

Glu174 lines the L-aspartate pocket. The interval 198 to 201 (QLFK) is aspartate. Arg220 contacts L-aspartate. ATP contacts are provided by residues 220-222 (RDE) and Gln229. His447 is an L-aspartate binding site. Glu480 contacts ATP. Position 487 (Arg487) interacts with L-aspartate. 532 to 535 (GFDR) contacts ATP.

This sequence belongs to the class-II aminoacyl-tRNA synthetase family. Type 1 subfamily. In terms of assembly, homodimer.

The protein resides in the cytoplasm. The catalysed reaction is tRNA(Asx) + L-aspartate + ATP = L-aspartyl-tRNA(Asx) + AMP + diphosphate. In terms of biological role, aspartyl-tRNA synthetase with relaxed tRNA specificity since it is able to aspartylate not only its cognate tRNA(Asp) but also tRNA(Asn). Reaction proceeds in two steps: L-aspartate is first activated by ATP to form Asp-AMP and then transferred to the acceptor end of tRNA(Asp/Asn). The protein is Aspartate--tRNA(Asp/Asn) ligase of Endomicrobium trichonymphae.